We begin with the raw amino-acid sequence, 539 residues long: Chaperonin GroEL (539 aa).

ATP-binding positions include 30–33 (TLGP), 87–91 (DGTTT), Gly-414, 479–481 (DAL), and Asp-495.

The protein belongs to the chaperonin (HSP60) family. Forms a cylinder of 14 subunits composed of two heptameric rings stacked back-to-back. Interacts with the co-chaperonin GroES.

Its subcellular location is the cytoplasm. It carries out the reaction ATP + H2O + a folded polypeptide = ADP + phosphate + an unfolded polypeptide.. In terms of biological role, together with its co-chaperonin GroES, plays an essential role in assisting protein folding. The GroEL-GroES system forms a nano-cage that allows encapsulation of the non-native substrate proteins and provides a physical environment optimized to promote and accelerate protein folding. This chain is Chaperonin GroEL, found in Caldicellulosiruptor saccharolyticus (strain ATCC 43494 / DSM 8903 / Tp8T 6331).